A 137-amino-acid chain; its full sequence is Small ribosomal subunit protein uS9c (137 aa).

A disordered region spans residues 106–137; it reads KSEGYLTRDPRVKERKKYGLKKARKAPQFSKR. Residues 118–137 show a composition bias toward basic residues; sequence KERKKYGLKKARKAPQFSKR.

The protein belongs to the universal ribosomal protein uS9 family.

The protein localises to the plastid. Its subcellular location is the chloroplast. This chain is Small ribosomal subunit protein uS9c (rps9), found in Pyropia yezoensis (Susabi-nori).